Reading from the N-terminus, the 382-residue chain is uncharacterized protein (382 aa).

The PE domain maps to 1 to 92 (MQFLSVIPEQ…GATAYRNTEF (92 aa)). 8 helical membrane-spanning segments follow: residues 23 to 43 (SALS…VSAA), 155 to 175 (AAVA…NGVV), 203 to 223 (FIVA…AVVG), 230 to 250 (TFLT…LAGV), 261 to 281 (LASG…VQLF), 284 to 304 (AFLL…IAVV), 315 to 335 (LVVP…AQFA), and 347 to 367 (LGAP…QGIG).

The protein belongs to the mycobacterial PE family.

Its subcellular location is the cell membrane. This is an uncharacterized protein from Mycobacterium bovis (strain ATCC BAA-935 / AF2122/97).